The following is a 618-amino-acid chain: Leucine aminopeptidase 2 (618 aa).

A peptide contacts are provided by residues 139-141 and 271-276; these read QCQ and PYGGME. Position 300 (His-300) interacts with Zn(2+). The active-site Proton acceptor is the Glu-301. Residues His-304 and Glu-323 each coordinate Zn(2+). Tyr-389 (proton donor) is an active-site residue.

Belongs to the peptidase M1 family. Zn(2+) serves as cofactor.

It localises to the cytoplasm. Its subcellular location is the nucleus. It carries out the reaction an epoxide + H2O = an ethanediol. In terms of biological role, aminopeptidase that preferentially cleaves di- and tripeptides. Also has low epoxide hydrolase activity (in vitro). Can hydrolyze the epoxide leukotriene LTA(4) but it forms preferentially 5,6-dihydroxy-7,9,11,14-eicosatetraenoic acid rather than the cytokine leukotriene B(4) as the product compared to the homologous mammalian enzyme (in vitro). The polypeptide is Leucine aminopeptidase 2 (Aspergillus clavatus (strain ATCC 1007 / CBS 513.65 / DSM 816 / NCTC 3887 / NRRL 1 / QM 1276 / 107)).